A 456-amino-acid chain; its full sequence is Transforming growth factor beta-1-induced transcript 1 protein (456 aa).

An N-acetylmethionine modification is found at methionine 1. A disordered region spans residues 1–79 (MEDLDALLSD…ATPPFSSSCG (79 aa)). Residues 1-195 (MEDLDALLSD…DTPSPPGPTS (195 aa)) are transcription activation. Residues 1–235 (MEDLDALLSD…CNKPIAGQVV (235 aa)) form an interaction with PTK2B/PYK2 region. An LD motif 1 motif is present at residues 3–15 (DLDALLSDLETTT). Phosphothreonine is present on threonine 33. Tyrosine 55 is modified (phosphotyrosine). At serine 63 the chain carries Phosphoserine. The tract at residues 78 to 131 (CGVLGTGLCELDRLLQELNATQFNITDEIMSQFPSSKETAGEQKEDQSEDKKRP) is interaction with PTK2/FAK1. The short motif at 87–99 (ELDRLLQELNATQ) is the LD motif 2 element. The tract at residues 109 to 146 (QFPSSKETAGEQKEDQSEDKKRPSPPPSPSPVLPKPSA) is disordered. The span at 116 to 130 (TAGEQKEDQSEDKKR) shows a compositional bias: basic and acidic residues. Serine 132, serine 136, serine 138, serine 159, serine 181, and serine 189 each carry phosphoserine. The segment covering 132 to 142 (SPPPSPSPVLP) has biased composition (pro residues). The LD motif 3 signature appears at 152–163 (ELDRLMASLSDF). Residues 166-200 (QNHLPASGPTPPPVPSSMSEDTPSPPGPTSKGSLD) form a disordered region. The LD motif 4 signature appears at 198–210 (SLDTMLGLLQSDL). 4 LIM zinc-binding domains span residues 221-280 (GLCG…RFSP), 281-338 (RCGL…QLFA), 339-398 (PRCQ…RRGS), and 399-456 (LCAT…KLFG). Serine 398 carries the phosphoserine modification. Residue threonine 402 is modified to Phosphothreonine.

Belongs to the paxillin family. Homooligomer. Interacts with CRIP2, HSPB1, ILK, LIMS1, LIMS2, NCK2, NUDT16L1, PAK, PPARG, PTPN12, TCF3, TCF7L2 and VCL. Forms a complex with GIT1 and ARHGEF7. Interacts with AR/androgen receptor in a ligand-dependent manner. Interacts with CSK, LYN, MAPK15, NR3C1, PPARG, PTK2/FAK1, PTK2B/PYK2, SLC6A3, SLC6A4, SMAD3, SRC and talin. Interacts (via LIM zinc-binding domain 2) with CBLC (via RING-type zinc finger); the interaction is direct and enhances CBLC E3 ubiquitin-protein ligase activity. Post-translationally, phosphorylated by gonadotropin-releasing hormone-activated SRC.

The protein localises to the cell junction. The protein resides in the focal adhesion. Its subcellular location is the nucleus matrix. It localises to the cytoplasm. It is found in the cytoskeleton. Functionally, functions as a molecular adapter coordinating multiple protein-protein interactions at the focal adhesion complex and in the nucleus. Links various intracellular signaling modules to plasma membrane receptors and regulates the Wnt and TGFB signaling pathways. May also regulate SLC6A3 and SLC6A4 targeting to the plasma membrane hence regulating their activity. In the nucleus, functions as a nuclear receptor coactivator regulating glucocorticoid, androgen, mineralocorticoid and progesterone receptor transcriptional activity. May play a role in the processes of cell growth, proliferation, migration, differentiation and senescence. May have a zinc-dependent DNA-binding activity. The polypeptide is Transforming growth factor beta-1-induced transcript 1 protein (TGFB1I1) (Bos taurus (Bovine)).